Consider the following 1147-residue polypeptide: ATP-dependent helicase/deoxyribonuclease subunit B (1147 aa).

Gly8–Ser15 contacts ATP. [4Fe-4S] cluster is bound by residues Cys780, Cys1092, Cys1095, and Cys1101.

This sequence belongs to the helicase family. AddB/RexB type 1 subfamily. Heterodimer of AddA and AddB. Requires Mg(2+) as cofactor. [4Fe-4S] cluster serves as cofactor.

Its function is as follows. The heterodimer acts as both an ATP-dependent DNA helicase and an ATP-dependent, dual-direction single-stranded exonuclease. Recognizes the chi site generating a DNA molecule suitable for the initiation of homologous recombination. The AddB subunit has 5' -&gt; 3' nuclease activity but not helicase activity. The chain is ATP-dependent helicase/deoxyribonuclease subunit B from Lachnoclostridium phytofermentans (strain ATCC 700394 / DSM 18823 / ISDg) (Clostridium phytofermentans).